We begin with the raw amino-acid sequence, 170 residues long: Transcriptional repressor NrdR (170 aa).

The segment at 3–34 (CPFCRHPDSRVVDSRTTDDGTSIRRRRQCPDC) is a zinc-finger region. The ATP-cone domain maps to 46 to 136 (LMVVKRSGVT…VYRAFDSLED (91 aa)). Residues 148-170 (RPSAEDRGSGETLEVPAPAIAAD) are disordered.

It belongs to the NrdR family. Zn(2+) serves as cofactor.

In terms of biological role, negatively regulates transcription of bacterial ribonucleotide reductase nrd genes and operons by binding to NrdR-boxes. The chain is Transcriptional repressor NrdR from Streptomyces griseus subsp. griseus (strain JCM 4626 / CBS 651.72 / NBRC 13350 / KCC S-0626 / ISP 5235).